The primary structure comprises 785 residues: Semaphorin-3E (785 aa).

The signal sequence occupies residues 1-25 (MLGRMASAQDLLILALCGLLLELPA). One can recognise a Sema domain in the interval 36–520 (RLRLSHKELW…TESVIAQVKF (485 aa)). Asn-48 carries N-linked (GlcNAc...) asparagine glycosylation. A disulfide bridge connects residues Cys-109 and Cys-119. An N-linked (GlcNAc...) asparagine glycan is attached at Asn-130. 4 cysteine pairs are disulfide-bonded: Cys-137–Cys-146, Cys-274–Cys-386, Cys-298–Cys-346, and Cys-523–Cys-541. A glycan (N-linked (GlcNAc...) asparagine) is linked at Asn-600. The Ig-like C2-type domain occupies 651 to 740 (LDAGTYFCQT…EYCEKVWCTD (90 aa)). Cys-658 and Cys-733 are disulfide-bonded. A disordered region spans residues 744-785 (KKLKMSPSKWKYANPQEKRQDQEKKARIRPEHYRLPRNIADS). The span at 759–777 (QEKRQDQEKKARIRPEHYR) shows a compositional bias: basic and acidic residues.

Belongs to the semaphorin family. In terms of tissue distribution, collapsin-1, -2, -3, and -5 bind to overlapping but distinct axon tracts.

The protein resides in the secreted. In terms of biological role, plays an important role in signaling via the cell surface receptor PLXND1. Mediates reorganization of the actin cytoskeleton, leading to the retraction of cell projections. Promotes focal adhesion disassembly and inhibits adhesion of endothelial cells to the extracellular matrix. Regulates angiogenesis. Can down-regulate sprouting angiogenesis. Required for normal vascular patterning during embryogenesis. Induces the collapse and paralysis of neuronal growth cones. Plays an important role in ensuring the specificity of synapse formation. In Gallus gallus (Chicken), this protein is Semaphorin-3E (SEMA3E).